Reading from the N-terminus, the 131-residue chain is Small ribosomal subunit protein uS11 (131 aa).

This sequence belongs to the universal ribosomal protein uS11 family. As to quaternary structure, part of the 30S ribosomal subunit. Interacts with proteins S7 and S18. Binds to IF-3.

Functionally, located on the platform of the 30S subunit, it bridges several disparate RNA helices of the 16S rRNA. Forms part of the Shine-Dalgarno cleft in the 70S ribosome. This chain is Small ribosomal subunit protein uS11, found in Geobacter sulfurreducens (strain ATCC 51573 / DSM 12127 / PCA).